The chain runs to 1547 residues: DNA topoisomerase 2 (1547 aa).

Residues 8–30 (FNKMSSPKQNGTGEPAPAKGQKG) are disordered. The span at 9–19 (NKMSSPKQNGT) shows a compositional bias: polar residues. Residues asparagine 99, asparagine 128, 156 to 158 (SSN), and 169 to 176 (GRNGYGAK) contribute to the ATP site. Positions 351–353 (KKK) are interaction with DNA. Residue 385–387 (QTK) participates in ATP binding. The region spanning 463 to 580 (CTLILTEGDS…ELLKLPFLEE (118 aa)) is the Toprim domain. Positions 469, 549, and 551 each coordinate Mg(2+). The Topo IIA-type catalytic domain maps to 723-1192 (IPSMIDGLKP…TAPMLWREDL (470 aa)). Tyrosine 813 (O-(5'-phospho-DNA)-tyrosine intermediate) is an active-site residue. Positions 996–1005 (KLQTTISMTC) are interaction with DNA. Disordered regions lie at residues 1107–1134 (TALE…VDPD), 1209–1249 (EELN…ISDD), 1261–1423 (KTRK…MDSD), and 1459–1547 (RQRR…SLSD). Positions 1109–1123 (LEDDDAQESEEEEPE) are enriched in acidic residues. Basic and acidic residues predominate over residues 1124-1134 (PDPKGKPVDPD). The span at 1216-1228 (KTSKAMAGKKNRK) shows a compositional bias: basic residues. 2 stretches are compositionally biased toward basic and acidic residues: residues 1238–1249 (NGRRVEPKISDD) and 1294–1315 (EKPE…DGLK). Residues 1331–1344 (TFSGSSSGEMSASD) are compositionally biased toward low complexity. Positions 1373–1383 (DDSGSDSEPEL) are enriched in acidic residues. 2 stretches are compositionally biased toward basic and acidic residues: residues 1384-1394 (LDNKIDSDHEA) and 1459-1488 (RQRR…DEKK). Basic residues predominate over residues 1513 to 1528 (KGKKKTAANPKKKAKK). Residues 1537 to 1547 (DFNISDSSLSD) show a composition bias toward polar residues.

This sequence belongs to the type II topoisomerase family. Homodimer. Requires Mg(2+) as cofactor. It depends on Mn(2+) as a cofactor. Ca(2+) is required as a cofactor.

It localises to the nucleus. It catalyses the reaction ATP-dependent breakage, passage and rejoining of double-stranded DNA.. In terms of biological role, control of topological states of DNA by transient breakage and subsequent rejoining of DNA strands. Topoisomerase II makes double-strand breaks. The polypeptide is DNA topoisomerase 2 (TOP2) (Bombyx mori (Silk moth)).